The following is a 154-amino-acid chain: MTKHVEIFTDGSCLGNPGPGGYGIVLRYKDVEKTLSKGYTLTTNNRMEMLAAVVALQTLKEPCRVTLTTDSQYVRQGITQWIHNWKKRGWKTADKKPVKNADLWQALDKETARHQVDWHWVKGHAGHRENEICDELARTAAENPTEEDTGYQPS.

The RNase H type-1 domain occupies 1–142 (MTKHVEIFTD…CDELARTAAE (142 aa)). 4 residues coordinate Mg(2+): aspartate 10, glutamate 48, aspartate 70, and aspartate 134.

The protein belongs to the RNase H family. Monomer. The cofactor is Mg(2+).

Its subcellular location is the cytoplasm. The catalysed reaction is Endonucleolytic cleavage to 5'-phosphomonoester.. In terms of biological role, endonuclease that specifically degrades the RNA of RNA-DNA hybrids. In Vibrio parahaemolyticus serotype O3:K6 (strain RIMD 2210633), this protein is Ribonuclease HI.